Here is a 156-residue protein sequence, read N- to C-terminus: Small ribosomal subunit protein uS7 (156 aa).

Belongs to the universal ribosomal protein uS7 family. As to quaternary structure, part of the 30S ribosomal subunit. Contacts proteins S9 and S11.

Functionally, one of the primary rRNA binding proteins, it binds directly to 16S rRNA where it nucleates assembly of the head domain of the 30S subunit. Is located at the subunit interface close to the decoding center, probably blocks exit of the E-site tRNA. This chain is Small ribosomal subunit protein uS7, found in Aeromonas hydrophila subsp. hydrophila (strain ATCC 7966 / DSM 30187 / BCRC 13018 / CCUG 14551 / JCM 1027 / KCTC 2358 / NCIMB 9240 / NCTC 8049).